Here is a 235-residue protein sequence, read N- to C-terminus: MTRPVIVALDLDNEKKLNELLPKLGKPENVFIKIGMELFFNEGPAIVRNLSRQGYQIFLDLKMSDIPNTVYNGAKALAQLGITYTTVHALGGSQMIKAAKEGLIAGTPVGKNIPKLLAVTELTSISDDILHEEQNCNLSMNQQVLSLAETAKKAGADGVICSPLEVKNLRQNVGDDFLYVTPGIRPAGNAKDDQSRVATPAQAKEWGSTAIVVGRPITLATNPEAAYEAIKKEFN.

Residues aspartate 10, lysine 33, aspartate 60–threonine 69, threonine 123, arginine 185, glutamine 194, glycine 214, and arginine 215 contribute to the substrate site. The active-site Proton donor is the lysine 62.

This sequence belongs to the OMP decarboxylase family. Type 1 subfamily. Homodimer.

It carries out the reaction orotidine 5'-phosphate + H(+) = UMP + CO2. It participates in pyrimidine metabolism; UMP biosynthesis via de novo pathway; UMP from orotate: step 2/2. Its function is as follows. Catalyzes the decarboxylation of orotidine 5'-monophosphate (OMP) to uridine 5'-monophosphate (UMP). This is Orotidine 5'-phosphate decarboxylase from Lactobacillus gasseri (strain ATCC 33323 / DSM 20243 / BCRC 14619 / CIP 102991 / JCM 1131 / KCTC 3163 / NCIMB 11718 / NCTC 13722 / AM63).